Reading from the N-terminus, the 222-residue chain is Thiamine-phosphate synthase (222 aa).

4-amino-2-methyl-5-(diphosphooxymethyl)pyrimidine-binding positions include 42-46 and asparagine 74; that span reads QYRDK. The Mg(2+) site is built by aspartate 75 and aspartate 94. Position 113 (threonine 113) interacts with 4-amino-2-methyl-5-(diphosphooxymethyl)pyrimidine. 140 to 142 contributes to the 2-[(2R,5Z)-2-carboxy-4-methylthiazol-5(2H)-ylidene]ethyl phosphate binding site; the sequence is SAT. Residue lysine 143 participates in 4-amino-2-methyl-5-(diphosphooxymethyl)pyrimidine binding. Position 169 (glycine 169) interacts with 2-[(2R,5Z)-2-carboxy-4-methylthiazol-5(2H)-ylidene]ethyl phosphate.

It belongs to the thiamine-phosphate synthase family. The cofactor is Mg(2+).

It carries out the reaction 2-[(2R,5Z)-2-carboxy-4-methylthiazol-5(2H)-ylidene]ethyl phosphate + 4-amino-2-methyl-5-(diphosphooxymethyl)pyrimidine + 2 H(+) = thiamine phosphate + CO2 + diphosphate. The catalysed reaction is 2-(2-carboxy-4-methylthiazol-5-yl)ethyl phosphate + 4-amino-2-methyl-5-(diphosphooxymethyl)pyrimidine + 2 H(+) = thiamine phosphate + CO2 + diphosphate. The enzyme catalyses 4-methyl-5-(2-phosphooxyethyl)-thiazole + 4-amino-2-methyl-5-(diphosphooxymethyl)pyrimidine + H(+) = thiamine phosphate + diphosphate. The protein operates within cofactor biosynthesis; thiamine diphosphate biosynthesis; thiamine phosphate from 4-amino-2-methyl-5-diphosphomethylpyrimidine and 4-methyl-5-(2-phosphoethyl)-thiazole: step 1/1. Functionally, condenses 4-methyl-5-(beta-hydroxyethyl)thiazole monophosphate (THZ-P) and 2-methyl-4-amino-5-hydroxymethyl pyrimidine pyrophosphate (HMP-PP) to form thiamine monophosphate (TMP). The polypeptide is Thiamine-phosphate synthase (Marinobacter nauticus (strain ATCC 700491 / DSM 11845 / VT8) (Marinobacter aquaeolei)).